The following is a 252-amino-acid chain: 4-hydroxy-tetrahydrodipicolinate reductase (252 aa).

8 to 13 is a binding site for NAD(+); sequence GALGRM. Arg36 is a binding site for NADP(+). Residues 89-91 and 114-117 contribute to the NAD(+) site; these read GTT and SSNF. Catalysis depends on His146, which acts as the Proton donor/acceptor. His147 is a binding site for (S)-2,3,4,5-tetrahydrodipicolinate. Lys150 acts as the Proton donor in catalysis. Position 156–157 (156–157) interacts with (S)-2,3,4,5-tetrahydrodipicolinate; the sequence is GT.

The protein belongs to the DapB family.

It localises to the cytoplasm. It carries out the reaction (S)-2,3,4,5-tetrahydrodipicolinate + NAD(+) + H2O = (2S,4S)-4-hydroxy-2,3,4,5-tetrahydrodipicolinate + NADH + H(+). It catalyses the reaction (S)-2,3,4,5-tetrahydrodipicolinate + NADP(+) + H2O = (2S,4S)-4-hydroxy-2,3,4,5-tetrahydrodipicolinate + NADPH + H(+). The protein operates within amino-acid biosynthesis; L-lysine biosynthesis via DAP pathway; (S)-tetrahydrodipicolinate from L-aspartate: step 4/4. Functionally, catalyzes the conversion of 4-hydroxy-tetrahydrodipicolinate (HTPA) to tetrahydrodipicolinate. The sequence is that of 4-hydroxy-tetrahydrodipicolinate reductase from Methanoculleus marisnigri (strain ATCC 35101 / DSM 1498 / JR1).